The sequence spans 194 residues: Large ribosomal subunit protein uL5 (194 aa).

It belongs to the universal ribosomal protein uL5 family. Part of the 50S ribosomal subunit; part of the 5S rRNA/L5/L18/L25 subcomplex. Contacts the 5S rRNA and the P site tRNA. Forms a bridge to the 30S subunit in the 70S ribosome.

This is one of the proteins that bind and probably mediate the attachment of the 5S RNA into the large ribosomal subunit, where it forms part of the central protuberance. In the 70S ribosome it contacts protein S13 of the 30S subunit (bridge B1b), connecting the 2 subunits; this bridge is implicated in subunit movement. Contacts the P site tRNA; the 5S rRNA and some of its associated proteins might help stabilize positioning of ribosome-bound tRNAs. The polypeptide is Large ribosomal subunit protein uL5 (Frankia alni (strain DSM 45986 / CECT 9034 / ACN14a)).